We begin with the raw amino-acid sequence, 443 residues long: Trigger factor (443 aa).

Residues 161–246 form the PPIase FKBP-type domain; sequence GDKVVIDFQG…IKKIMEGKLP (86 aa).

It belongs to the FKBP-type PPIase family. Tig subfamily.

The protein resides in the cytoplasm. It carries out the reaction [protein]-peptidylproline (omega=180) = [protein]-peptidylproline (omega=0). Functionally, involved in protein export. Acts as a chaperone by maintaining the newly synthesized protein in an open conformation. Functions as a peptidyl-prolyl cis-trans isomerase. The polypeptide is Trigger factor (Legionella pneumophila subsp. pneumophila (strain Philadelphia 1 / ATCC 33152 / DSM 7513)).